We begin with the raw amino-acid sequence, 423 residues long: Kynureninase (423 aa).

Residues Leu105, Ser106, 133 to 136 (FPSD), Asp218, His221, and Tyr243 each bind pyridoxal 5'-phosphate. Lys244 is subject to N6-(pyridoxal phosphate)lysine. Pyridoxal 5'-phosphate is bound by residues Trp273 and Asn301.

It belongs to the kynureninase family. In terms of assembly, homodimer. Pyridoxal 5'-phosphate is required as a cofactor.

The catalysed reaction is L-kynurenine + H2O = anthranilate + L-alanine + H(+). It carries out the reaction 3-hydroxy-L-kynurenine + H2O = 3-hydroxyanthranilate + L-alanine + H(+). It functions in the pathway amino-acid degradation; L-kynurenine degradation; L-alanine and anthranilate from L-kynurenine: step 1/1. It participates in cofactor biosynthesis; NAD(+) biosynthesis; quinolinate from L-kynurenine: step 2/3. Catalyzes the cleavage of L-kynurenine (L-Kyn) and L-3-hydroxykynurenine (L-3OHKyn) into anthranilic acid (AA) and 3-hydroxyanthranilic acid (3-OHAA), respectively. This chain is Kynureninase, found in Xanthomonas oryzae pv. oryzae (strain KACC10331 / KXO85).